The sequence spans 115 residues: Macrophage migration inhibitory factor (115 aa).

The Proton acceptor; via imino nitrogen role is filled by P2. Positions 33 and 65 each coordinate substrate. K78 is modified (N6-acetyllysine; alternate). At K78 the chain carries N6-succinyllysine; alternate. N98 is a substrate binding site.

This sequence belongs to the MIF family. In terms of assembly, homotrimer. Interacts with CXCR2 extracellular domain. Interacts with the CD74 extracellular domain, USO1, COPS5 and BNIPL.

It localises to the secreted. The protein resides in the cytoplasm. It carries out the reaction 3-phenylpyruvate = enol-phenylpyruvate. It catalyses the reaction L-dopachrome = 5,6-dihydroxyindole-2-carboxylate. Functionally, pro-inflammatory cytokine involved in the innate immune response to bacterial pathogens. The expression of MIF at sites of inflammation suggests a role as mediator in regulating the function of macrophages in host defense. Counteracts the anti-inflammatory activity of glucocorticoids. Has phenylpyruvate tautomerase and dopachrome tautomerase activity (in vitro), but the physiological substrate is not known. It is not clear whether the tautomerase activity has any physiological relevance, and whether it is important for cytokine activity. In Homo sapiens (Human), this protein is Macrophage migration inhibitory factor.